A 301-amino-acid polypeptide reads, in one-letter code: Prohibitin-2 (301 aa).

Necessary for transcriptional repression regions lie at residues 19-49 (MGTA…GHRA) and 150-174 (ASQL…RAKD). Residues 191–237 (REYTAAVESKQVAQQEAQRAQFLVEKAKQDQKQKIVQAEGEAAAAKM) adopt a coiled-coil conformation.

Belongs to the prohibitin family. The mitochondrial prohibitin complex consists of two subunits (PHB1 and PHB2), assembled into a membrane-associated ring-shaped supercomplex of approximately 1 mDa.

The protein localises to the mitochondrion inner membrane. It is found in the cytoplasm. It localises to the nucleus. The protein resides in the cell membrane. Functionally, protein with pleiotropic attributes mediated in a cell-compartment- and tissue-specific manner, which include the plasma membrane-associated cell signaling functions, mitochondrial chaperone, and transcriptional co-regulator of transcription factors and sex steroid hormones in the nucleus. Its function is as follows. In the mitochondria, together with PHB, forms large ring complexes (prohibitin complexes) in the inner mitochondrial membrane (IMM) and functions as a chaperone protein that stabilizes mitochondrial respiratory enzymes and maintains mitochondrial integrity in the IMM, which is required for mitochondrial morphogenesis, neuronal survival, and normal lifespan. In the nucleus, serves as transcriptional co-regulator. This chain is Prohibitin-2 (phb2), found in Xenopus tropicalis (Western clawed frog).